A 1218-amino-acid chain; its full sequence is DNA polymerase subunit gamma-1 (1218 aa).

The interval 31-50 (LDPVPSDGRPPSQMPSSENG) is disordered. Positions 179 to 183 (VFDVE) match the Exo I motif. The active-site Exonuclease activity is the D181. Residues 250 to 258 (VGHNVSFDR) carry the Exo II motif. Residue S289 participates in DNA binding. The Exo III motif lies at 378-386 (YCARDVWAT). The segment at 484–524 (KKVKKPASASKLPIEGAGPFGDPMDQEDPGPPSEEEELQRS) is disordered. The tract at residues 492–553 (ASKLPIEGAG…RPQHLPGHPG (62 aa)) is accessory-interacting determinant. Acidic residues predominate over residues 507–520 (MDQEDPGPPSEEEE). Residue R561 coordinates RNA. S575 contacts DNA. Residues H733, G742, and K747 each coordinate RNA. DNA is bound by residues K785 and T828. The tract at residues 837-843 (TWLTASN) is trigger loop. The RNA site is built by S842 and R848. A Pol A motif is present at residues 866–875 (VGADVDSQEL). 7 residues coordinate a 2'-deoxyribonucleoside 5'-triphosphate: D869, V870, S872, E874, R922, K926, and Y930. Mg(2+) is bound by residues D869 and V870. A Pol B motif is present at residues 922 to 937 (REHAKIFNYGRIYGAG). T1073 and S1074 together coordinate DNA. The Pol C motif lies at 1113-1120 (HDEVRYLV). D1114 contacts a 2'-deoxyribonucleoside 5'-triphosphate. D1114 is a binding site for Mg(2+).

The protein belongs to the DNA polymerase type-A family. As to quaternary structure, heterotrimer composed of a catalytic subunit and a homodimer of accessory subunits (POLG:POLG2). Interacts with TTC3. Interacts with LIG3. Requires Mg(2+) as cofactor.

It localises to the mitochondrion. Its subcellular location is the mitochondrion matrix. The protein localises to the mitochondrion nucleoid. It carries out the reaction DNA(n) + a 2'-deoxyribonucleoside 5'-triphosphate = DNA(n+1) + diphosphate. The catalysed reaction is a 3'-end 2'-deoxyribonucleotidyl-deoxyribonucleotide-DNA + H2O = a 3'-end 2'-deoxyribonucleotide-DNA + a 2'-deoxyribonucleoside 5'-phosphate + H(+). The enzyme catalyses a 5'-end 2'-deoxyribose-2'-deoxyribonucleotide-DNA = (2E,4S)-4-hydroxypenten-2-al-5-phosphate + a 5'-end 5'-phospho-2'-deoxyribonucleoside-DNA + H(+). Its activity is regulated as follows. Inhibited by dideoxynucleotides such as antiviral agent zalcitabine. Catalytic subunit of DNA polymerase gamma solely responsible for replication of mitochondrial DNA (mtDNA). Replicates both heavy and light strands of the circular mtDNA genome using a single-stranded DNA template, RNA primers and the four deoxyribonucleoside triphosphates as substrates. Has 5' -&gt; 3' polymerase activity. Functionally interacts with TWNK and SSBP1 at the replication fork to form a highly processive replisome, where TWNK unwinds the double-stranded DNA template prior to replication and SSBP1 covers the parental heavy strand to enable continuous replication of the entire mitochondrial genome. A single nucleotide incorporation cycle includes binding of the incoming nucleotide at the insertion site, a phosphodiester bond formation reaction that extends the 3'-end of the primer DNA, and translocation of the primer terminus to the post-insertion site. After completing replication of a mtDNA strand, mediates 3' -&gt; 5' exonucleolytic degradation at the nick to enable proper ligation. Highly accurate due to high nucleotide selectivity and 3' -&gt; 5' exonucleolytic proofreading. Proficiently corrects base substitutions, single-base additions and deletions in non-repetitive sequences and short repeats, but displays lower proofreading activity when replicating longer homopolymeric stretches. Exerts exonuclease activity toward single-stranded DNA and double-stranded DNA containing 3'-terminal mispairs. When a misincorporation occurs, transitions from replication to a pro-nucleolytic editing mode and removes the missincorporated nucleoside in the exonuclease active site. Proceeds via an SN2 nucleolytic mechanism in which Asp-198 catalyzes phosphodiester bond hydrolysis and Glu-200 stabilizes the leaving group. As a result the primer strand becomes one nucleotide shorter and is positioned in the post-insertion site, ready to resume DNA synthesis. Exerts 5'-deoxyribose phosphate (dRP) lyase activity and mediates repair-associated mtDNA synthesis (gap filling) in base-excision repair pathway. Catalyzes the release of the 5'-terminal 2-deoxyribose-5-phosphate sugar moiety from incised apurinic/apyrimidinic (AP) sites to produce a substrate for DNA ligase. The dRP lyase reaction does not require divalent metal ions and likely proceeds via a Schiff base intermediate in a beta-elimination reaction mechanism. The polypeptide is DNA polymerase subunit gamma-1 (Mus musculus (Mouse)).